The chain runs to 66 residues: Opicalcin-1 (66 aa).

The signal sequence occupies residues 1-22 (MKPSLIIVTFIVVFMAISCVAA). A propeptide spanning residues 23–31 (DDEQETWIE) is cleaved from the precursor. 3 cysteine pairs are disulfide-bonded: C36/C50, C43/C54, and C49/C65. The segment at 55–57 (KRR) is essential for stimulation of [3H]ryanodine binding to RYR1.

Belongs to the scorpion calcin family. Expressed by the venom gland.

The protein localises to the secreted. Functionally, this toxin stabilizes ryanodine receptor 1 (RyR1) opening in a long-lasting subconductance state (35% of the full conductance state). Furthermore, it triggers calcium release from sarcoplasmic vesicles (2 nM are enough to induce a sharp release, and 67% of the total calcium is released after toxin (100 nM) addition) probably by acting as a cell-penetrating peptide (CPP). In addition, it has been shown to dose-dependently stimulate ryanodine binding to RyR1 (EC(50)=0.3 nM). It also augments the bell-shaped calcium-[3H]ryanodine binding curve that is maximal at about 10 uM calcium concentration. It binds a different site as ryanodine. It acts synergistically with caffeine. In vivo, intracerebroventricular injection into mice induces neurotoxic symptoms, followed by death. This chain is Opicalcin-1, found in Opistophthalmus carinatus (African yellow leg scorpion).